A 52-amino-acid chain; its full sequence is Ribosome modulation factor (52 aa).

It belongs to the ribosome modulation factor family.

It is found in the cytoplasm. Its function is as follows. During stationary phase, converts 70S ribosomes to an inactive dimeric form (100S ribosomes). This Xenorhabdus nematophila (strain ATCC 19061 / DSM 3370 / CCUG 14189 / LMG 1036 / NCIMB 9965 / AN6) protein is Ribosome modulation factor.